The following is a 380-amino-acid chain: Cytochrome b (380 aa).

A run of 4 helical transmembrane segments spans residues 33–53 (FGSL…FLAM), 77–98 (WLIR…YMHI), 113–133 (WNIG…GYVL), and 178–198 (FFAF…IHLL). Heme b contacts are provided by histidine 83 and histidine 97. Histidine 182 and histidine 196 together coordinate heme b. Histidine 201 serves as a coordination point for a ubiquinone. 4 helical membrane passes run 226–246 (YKDL…ALFS), 288–308 (LGGV…PLLH), 320–340 (ITQF…WIGG), and 347–367 (FIII…VLFP).

Belongs to the cytochrome b family. The cytochrome bc1 complex contains 3 respiratory subunits (MT-CYB, CYC1 and UQCRFS1), 2 core proteins (UQCRC1 and UQCRC2) and probably 6 low-molecular weight proteins. Heme b is required as a cofactor.

Its subcellular location is the mitochondrion inner membrane. Functionally, component of the ubiquinol-cytochrome c reductase complex (complex III or cytochrome b-c1 complex) that is part of the mitochondrial respiratory chain. The b-c1 complex mediates electron transfer from ubiquinol to cytochrome c. Contributes to the generation of a proton gradient across the mitochondrial membrane that is then used for ATP synthesis. This chain is Cytochrome b (mt-cyb), found in Carassius auratus (Goldfish).